The chain runs to 1139 residues: Integrin alpha ina-1 (1139 aa).

Residues 1 to 19 form the signal peptide; it reads MRECIISWTLLLCLSCVKS. Residues 20–1084 lie on the Extracellular side of the membrane; it reads FNLDVNAPIY…PTIGDSRPIP (1065 aa). The stretch at 21–85 is one FG-GAP 1 repeat; that stretch reads NLDVNAPIYR…CDINTFYNGG (65 aa). N-linked (GlcNAc...) asparagine glycosylation is found at asparagine 108 and asparagine 136. FG-GAP repeat units lie at residues 111 to 171, 180 to 231, 242 to 302, 307 to 370, 378 to 438, and 448 to 510; these read RGRT…LQST, LPTT…IFDS, NGDM…SSSK, EDKF…QRKQ, HPPK…IEKF, and GNDL…MEKR. Asparagine 313 carries N-linked (GlcNAc...) asparagine glycosylation. N-linked (GlcNAc...) asparagine glycans are attached at residues asparagine 580, asparagine 788, asparagine 851, and asparagine 1026. The helical transmembrane segment at 1085-1106 threads the bilayer; it reads WWIYVIAAVIGVLILSLIIICL. Topologically, residues 1107-1139 are cytoplasmic; it reads SKCGFFKRNRLDQPSLYTAQLKHEREEWADTGL.

The protein belongs to the integrin alpha chain family. In terms of assembly, heterodimer of an alpha and a beta subunit. Alpha ina-1 associates with beta pat-3. Interacts (via cytoplasmic domain) with src-1 (when phosphorylated at 'Tyr-416').

The protein resides in the membrane. It is found in the cell projection. It localises to the phagocytic cup. The protein localises to the cytoplasmic vesicle. Its subcellular location is the phagosome membrane. Plays a role in cell migration, axon fasciculation, and morphogenesis. During gonad morphogenesis, involved in distal tip cell (DTC)-mediated guidance of gonad elongation, in maintaining their sharp tapering morphology and in their migration. Involved in the anterior-posterior positioning of QR neuroblast descendants by regulating the migratory speed of QR.p. Probably by acting as a receptor for apoptotic cells, plays a role in the clearance of apoptotic cells during mid-embryogenesis. This is Integrin alpha ina-1 (ina-1) from Caenorhabditis elegans.